A 73-amino-acid chain; its full sequence is Homeodomain-only protein (73 aa).

A DNA-binding region (homeobox; degenerate) is located at residues 3 to 62 (AEPANGPTEDQVEILEYNFNKVNRHPDPTTLCLIAAEAGLSEEETQKWFKQRLAQWRRSE).

Interacts with serum response factor (SRF). Component of a large complex containing histone deacetylases such as HDAC2. Interacts with the acetylated forms of HSPA1A and HSPA1B. Interacts with HSPA8.

It localises to the nucleus. The protein resides in the cytoplasm. In terms of biological role, atypical homeodomain protein which does not bind DNA and is required to modulate cardiac growth and development. Acts via its interaction with SRF, thereby modulating the expression of SRF-dependent cardiac-specific genes and cardiac development. Prevents SRF-dependent transcription either by inhibiting SRF binding to DNA or by recruiting histone deacetylase (HDAC) proteins that prevent transcription by SRF. Overexpression causes cardiac hypertrophy. Acts as a co-chaperone for HSPA1A and HSPA1B chaperone proteins and assists in chaperone-mediated protein refolding. In Sus scrofa (Pig), this protein is Homeodomain-only protein (HOPX).